The following is a 231-amino-acid chain: Quercetin 2,3-dioxygenase (231 aa).

Positions 57, 59, 101, and 103 each coordinate a divalent metal cation.

The protein belongs to the pirin family. It depends on Zn(2+) as a cofactor. Requires Co(2+) as cofactor. The cofactor is Fe(2+).

The enzyme catalyses quercetin + O2 = 2-(3,4-dihydroxybenzoyloxy)-4,6-dihydroxybenzoate + CO. It participates in flavonoid metabolism; quercetin degradation. Has quercetin 2,3-dioxygenase activity in vitro. Its physiological role is unknown; however, may provide a mechanism that would avoid inhibition of key cellular proteins, such as DNA gyrase, by quercetin. This is Quercetin 2,3-dioxygenase (yhhW) from Escherichia coli O157:H7.